The following is a 341-amino-acid chain: HTH-type sugar sensing transcriptional regulator TrmBL1 (341 aa).

Positions 32–53 (SKATDVTKESGIPHTRIYDVLS) form a DNA-binding region, H-T-H motif.

Belongs to the transcriptional regulator TrmB family. In terms of assembly, homotetramer. Forms homooctamers in the presence of maltotriose or maltose.

With respect to regulation, repressor activity is regulated by binding of different sugars to TrmBL1. Binding of maltose and maltotriose results in derepression of the target genes. However, high sugar concentration results in formation of octamers with high affinity for DNA, which may prevent transcription of target genes. Functionally, global transcriptional repressor of the maltodextrin transport gene cluster (mdxE operon) and most likely of all genes encoding glycolytic enzymes. Acts by binding to the conserved TGM (Thermococcales-Glycolytic-Motif) sequences in their promoter region. Can also interact with non-TGM sequences. This chain is HTH-type sugar sensing transcriptional regulator TrmBL1 (trmBL1), found in Pyrococcus furiosus (strain ATCC 43587 / DSM 3638 / JCM 8422 / Vc1).